The primary structure comprises 158 residues: MQSHLSAWLVKHELVHRSLGFDYQGIETLQIKPEDWDSIAVISYVYGYNYLRSQCAYDVAPGGFLASVYHLTRIQYGVDQPEEVCIKVFVPRENPIVPSVFWVWRSADFQERESYDMFGISYDNHPRLKRILMPESWIGWPLRKDYITPNFYEIQDAH.

This sequence belongs to the complex I 30 kDa subunit family. As to quaternary structure, NDH is composed of at least 16 different subunits, 5 of which are encoded in the nucleus.

It localises to the plastid. The protein resides in the chloroplast thylakoid membrane. The enzyme catalyses a plastoquinone + NADH + (n+1) H(+)(in) = a plastoquinol + NAD(+) + n H(+)(out). The catalysed reaction is a plastoquinone + NADPH + (n+1) H(+)(in) = a plastoquinol + NADP(+) + n H(+)(out). In terms of biological role, NDH shuttles electrons from NAD(P)H:plastoquinone, via FMN and iron-sulfur (Fe-S) centers, to quinones in the photosynthetic chain and possibly in a chloroplast respiratory chain. The immediate electron acceptor for the enzyme in this species is believed to be plastoquinone. Couples the redox reaction to proton translocation, and thus conserves the redox energy in a proton gradient. The sequence is that of NAD(P)H-quinone oxidoreductase subunit J, chloroplastic from Lemna minor (Common duckweed).